The primary structure comprises 160 residues: Phosphopantetheine adenylyltransferase (160 aa).

Residue Ser10 participates in substrate binding. Residues 10–11 and His18 each bind ATP; that span reads SF. Residues Lys42, Thr74, and Arg88 each contribute to the substrate site. ATP contacts are provided by residues 89 to 91, Glu99, and 124 to 130; these read GLR and YSFISST.

The protein belongs to the bacterial CoaD family. In terms of assembly, homohexamer. The cofactor is Mg(2+).

It localises to the cytoplasm. It catalyses the reaction (R)-4'-phosphopantetheine + ATP + H(+) = 3'-dephospho-CoA + diphosphate. It functions in the pathway cofactor biosynthesis; coenzyme A biosynthesis; CoA from (R)-pantothenate: step 4/5. Functionally, reversibly transfers an adenylyl group from ATP to 4'-phosphopantetheine, yielding dephospho-CoA (dPCoA) and pyrophosphate. This chain is Phosphopantetheine adenylyltransferase, found in Leptospira interrogans serogroup Icterohaemorrhagiae serovar copenhageni (strain Fiocruz L1-130).